The chain runs to 799 residues: Zinc finger protein 227 (799 aa).

Residues Val23–His94 enclose the KRAB domain. 19 consecutive C2H2-type zinc fingers follow at residues His250–His272, Pro269–His291, Tyr324–His346, Tyr352–His374, Tyr380–His402, Tyr408–His430, Tyr436–His458, Tyr464–His486, Tyr492–His514, Phe520–His542, Tyr548–His570, Tyr576–His598, Tyr604–His626, Tyr632–His654, Tyr660–His682, Tyr688–His710, His716–His738, Phe744–His766, and Tyr772–His794.

The protein belongs to the krueppel C2H2-type zinc-finger protein family.

The protein localises to the nucleus. Functionally, may be involved in transcriptional regulation. The polypeptide is Zinc finger protein 227 (ZNF227) (Homo sapiens (Human)).